The sequence spans 688 residues: MAKHAPIFPNVQGFLHGGDYNPDQWLAYPDVLEQDVQLMREAKWNVVSLGIFSWVSLEPEEGLFTFEWLDEAIERLTHAGVRILLATPSGARPAWLSAKYPEVLRVGPDGRRNRHGGRHNHCYTSPIYREKVRIINRKLAERYAHHPGVIGWHVSNEYGGECHCPLCQEAFREWLKRKYKTLDALNHAWWTPFWSHTYTDWSQIESPMPHGETSIHGLNLDWKRFVTDQTVDFCRHEIEPLKQVNPNLPVTTNFMGTYPGLNYWRFRDVLDVISWDSYPRWHAHETLVPEAVHTAMVHDLNRSILKKPFLLMESTPSVTNWQAVSKQKRPGVHVLVSLQAVAHGADSVQYFQWRKSRGSYEKFHGAVVDHVGHANTRVFRDVQAVGEMLERLAPMAGAEVKADAAVIFDWENRWALEDAKGPRNIGMHYEETVVNHYAALWRMGVPMDVIDEEQPLDGYKLVVAPMLYMVRPGVAERMKAFVERGGSLVLTYWSGIVDENDLVFLGGFPGPLRELAGVWAEEIDALYDGERVPVRVADGNPLGLAGHYEARELCEVVHLEGAEPIAVYGADYYEGMPAATVHRVGKGKVYYVAARLEDAFLRDFFARVAAEAGVARAIERELPDGVSAMVRSGDGVEYVMLMNFTPEAREVALDEAEYKPLYGEAPTDGAVRLPAYGVSVLERPARNG.

Arginine 118 is a substrate binding site. Cysteine 122 is a binding site for Zn(2+). Asparagine 156 is a binding site for substrate. Glutamate 157 functions as the Proton donor in the catalytic mechanism. Residues cysteine 162, cysteine 164, and cysteine 167 each coordinate Zn(2+). Glutamate 313 (nucleophile) is an active-site residue. Residues tryptophan 321 and 361 to 364 (EKFH) contribute to the substrate site.

Belongs to the glycosyl hydrolase 42 family.

It carries out the reaction Hydrolysis of terminal non-reducing beta-D-galactose residues in beta-D-galactosides.. Its activity is regulated as follows. Ca(2+), Mg(2+) and EDTA have little effect on enzyme activity at 1-10 mM. Zn(2+) at 3, 5, 7 or 10 mM inhibits activity by 20%, 30%, 40% and 65%, respectively. Its function is as follows. Hydrolyzes o-nitrophenyl-beta-D-galactopyranoside (ONPG) and p-nitrophenyl-beta-D-fucopyranoside (PNPF), but not p-nitrophenyl-beta-D-glucopyranoside (PNPG), p-nitrophenyl-beta-D-xylopyranoside (PNPX) or p-nitrophenyl-beta-D-arabinopyranoside (PNPA). Also hydrolyzes lactose, including lactose in milk. This Alicyclobacillus acidocaldarius subsp. acidocaldarius (strain ATCC 27009 / DSM 446 / BCRC 14685 / JCM 5260 / KCTC 1825 / NBRC 15652 / NCIMB 11725 / NRRL B-14509 / 104-IA) (Bacillus acidocaldarius) protein is Beta-galactosidase BglY (bglY).